The primary structure comprises 87 residues: Phosphoribosyl-ATP pyrophosphatase (87 aa).

Belongs to the PRA-PH family.

The protein localises to the cytoplasm. It catalyses the reaction 1-(5-phospho-beta-D-ribosyl)-ATP + H2O = 1-(5-phospho-beta-D-ribosyl)-5'-AMP + diphosphate + H(+). The protein operates within amino-acid biosynthesis; L-histidine biosynthesis; L-histidine from 5-phospho-alpha-D-ribose 1-diphosphate: step 2/9. The protein is Phosphoribosyl-ATP pyrophosphatase of Corynebacterium diphtheriae (strain ATCC 700971 / NCTC 13129 / Biotype gravis).